The sequence spans 131 residues: MASPAKKVVKKKKEKKNIPNGVAHIQATFNNTIITITDPAGNVVAWSSAGGKGFKGSRKSTPFAAQVAAEDCAKKAQDHGMRSVEVYVKGPGSGRESALRALQAAGFHVNFIRDVTPIPHNGCRPPKRRRV.

This sequence belongs to the universal ribosomal protein uS11 family. In terms of assembly, part of the 30S ribosomal subunit. Interacts with proteins S7 and S18. Binds to IF-3.

Functionally, located on the platform of the 30S subunit, it bridges several disparate RNA helices of the 16S rRNA. Forms part of the Shine-Dalgarno cleft in the 70S ribosome. The polypeptide is Small ribosomal subunit protein uS11 (Geobacter metallireducens (strain ATCC 53774 / DSM 7210 / GS-15)).